A 346-amino-acid chain; its full sequence is G-protein coupled receptor homolog U12 (346 aa).

The Extracellular segment spans residues 1–31 (MICYSFAKNVTFAFLIILQNFFSQHDEEYKY). Residues 32–56 (NYTCITPTVRKAQRLESVINGIMLT) traverse the membrane as a helical segment. Residues 57 to 83 (LILPVSTVVICTLLIYYKWTKQTITSP) are Cytoplasmic-facing. A helical transmembrane segment spans residues 84 to 108 (YLITLFISDSLHSLTVLLLTLNREA). Over 109-115 (LTNLNQA) the chain is Extracellular. Residues 116-142 (LCQCVLFVYSASCTYSLCMLAVISTIR) traverse the membrane as a helical segment. The Cytoplasmic portion of the chain corresponds to 143 to 159 (YRTLQRRTLNDKNNNHI). Residues 160–181 (KRNVGILFLSSAMCAIPAVLYV) traverse the membrane as a helical segment. The Extracellular segment spans residues 182 to 208 (QVEKKKGNYGKCNIHISTQKAYDLFIG). A helical membrane pass occupies residues 209–229 (IKIVYCFLWGIFPTVIFSYFY). Residues 230-245 (VIFGKTLRALTQSKHN) lie on the Cytoplasmic side of the membrane. A helical membrane pass occupies residues 246 to 272 (KTLSFISLLILSFLCIQIPNLLVMSVE). Residues 273-286 (IFFLYIANTSCLGT) lie on the Extracellular side of the membrane. Residues 287 to 310 (IQREIVQIISRLMPEIHCLSNPLV) form a helical membrane-spanning segment. The Cytoplasmic portion of the chain corresponds to 311–346 (YAFTRTDFRLRFYDFIKCNLCNSSLKRKRNPLTIKN).

Belongs to the G-protein coupled receptor 1 family.

Its subcellular location is the host cell membrane. This is G-protein coupled receptor homolog U12 (U12) from Homo sapiens (Human).